The following is an 842-amino-acid chain: Alanine--tRNA ligase (842 aa).

Residues histidine 549, histidine 553, cysteine 650, and histidine 654 each contribute to the Zn(2+) site.

The protein belongs to the class-II aminoacyl-tRNA synthetase family. Zn(2+) serves as cofactor.

The protein localises to the cytoplasm. It catalyses the reaction tRNA(Ala) + L-alanine + ATP = L-alanyl-tRNA(Ala) + AMP + diphosphate. Functionally, catalyzes the attachment of alanine to tRNA(Ala) in a two-step reaction: alanine is first activated by ATP to form Ala-AMP and then transferred to the acceptor end of tRNA(Ala). Also edits incorrectly charged Ser-tRNA(Ala) and Gly-tRNA(Ala) via its editing domain. In Campylobacter jejuni (strain RM1221), this protein is Alanine--tRNA ligase.